We begin with the raw amino-acid sequence, 138 residues long: ATP synthase epsilon chain (138 aa).

It belongs to the ATPase epsilon chain family. As to quaternary structure, F-type ATPases have 2 components, CF(1) - the catalytic core - and CF(0) - the membrane proton channel. CF(1) has five subunits: alpha(3), beta(3), gamma(1), delta(1), epsilon(1). CF(0) has three main subunits: a, b and c.

The protein localises to the cell inner membrane. Produces ATP from ADP in the presence of a proton gradient across the membrane. This Cupriavidus pinatubonensis (strain JMP 134 / LMG 1197) (Cupriavidus necator (strain JMP 134)) protein is ATP synthase epsilon chain.